Consider the following 448-residue polypeptide: Tubulin beta chain (448 aa).

GTP-binding residues include Q11, E69, S138, G142, T143, G144, N204, and N226. Residue E69 coordinates Mg(2+). The tract at residues 425 to 448 (YQDASISEGEEEYLEEEEPLEHEE) is disordered. Residues 432–448 (EGEEEYLEEEEPLEHEE) are compositionally biased toward acidic residues.

It belongs to the tubulin family. As to quaternary structure, dimer of alpha and beta chains. A typical microtubule is a hollow water-filled tube with an outer diameter of 25 nm and an inner diameter of 15 nM. Alpha-beta heterodimers associate head-to-tail to form protofilaments running lengthwise along the microtubule wall with the beta-tubulin subunit facing the microtubule plus end conferring a structural polarity. Microtubules usually have 13 protofilaments but different protofilament numbers can be found in some organisms and specialized cells. It depends on Mg(2+) as a cofactor.

Its subcellular location is the cytoplasm. It localises to the cytoskeleton. Functionally, tubulin is the major constituent of microtubules, a cylinder consisting of laterally associated linear protofilaments composed of alpha- and beta-tubulin heterodimers. Microtubules grow by the addition of GTP-tubulin dimers to the microtubule end, where a stabilizing cap forms. Below the cap, tubulin dimers are in GDP-bound state, owing to GTPase activity of alpha-tubulin. This Aspergillus oryzae (strain ATCC 42149 / RIB 40) (Yellow koji mold) protein is Tubulin beta chain (benA56).